The sequence spans 507 residues: ATP synthase subunit alpha, chloroplastic (507 aa).

G170 to T177 contacts ATP.

It belongs to the ATPase alpha/beta chains family. F-type ATPases have 2 components, CF(1) - the catalytic core - and CF(0) - the membrane proton channel. CF(1) has five subunits: alpha(3), beta(3), gamma(1), delta(1), epsilon(1). CF(0) has four main subunits: a, b, b' and c.

It localises to the plastid. It is found in the chloroplast thylakoid membrane. The enzyme catalyses ATP + H2O + 4 H(+)(in) = ADP + phosphate + 5 H(+)(out). Its function is as follows. Produces ATP from ADP in the presence of a proton gradient across the membrane. The alpha chain is a regulatory subunit. In Ranunculus macranthus (Large buttercup), this protein is ATP synthase subunit alpha, chloroplastic.